A 777-amino-acid chain; its full sequence is MAAPPDLQDEPLSPANPGSQLFGGRGEGEEATPKGARPAQQDGEPAWGSGAGAGVVSSRGLCSGPARSPPVAMETASTGVAAVPDALDHSSSPTLKDGEGACYTSLISDICYPPREDSAYFTGILQKENGHITTSESPEELGTPGPSLPEVPGTEPHGLLSSDSGIEMTPAESTEVNKILADPLDQMKAEACKYIDITRPQEAKGQEEQSPGLEDKDLDFKDKDSEVSTKPEGVHAPNQPSPVEGKLIKDNLFEESTFAPYIDELSDEQHRMSLVTAPVKITLTEIGPPVMTATHETIPEKQDLCLKPSPDTVPTVTVSEPEDDSPGSVTPPSSGTEPSAAESQGKGSVSEDELIAAIKEAKGLSYETTESPRPVGQAADRPKVKARSGLPTIPSSLDQEASSAESGDSEIELVSEDPMASEDALPSGYVSFGHVSGPPPSPASPSIQYSILREEREAELDSELIIESCDASSASEESPKREQDSPPMKPGVLDAIREETSSRATEERAPSHQGPVEPDPILSFTPVTLQSRPEPSSGDGAPVPEPPKSQQQKPEEEAVSSSQSPAATEIPGPLGSDLVPPLPFFNKQKAIDLLYWRDIKQTGIVFGSFLLLLFSLTQFSVVSVVAYLALAALSATISFRIYKSVLQAVQKTDEGHPFKAYLELEITLSQEQIQKYTDCLQLYVNSTLKELRRLFLVQDLVDSLKFAVLMWLLTYVGALFNGLTLLLMAVVSMFTLPVVYVKHQAQVDQYLGLVRTHINTVVAKIQAKIPGAKRHAE.

Disordered regions lie at residues 1–77, 129–182, 198–245, and 293–573; these read MAAP…ETAS, NGHI…ILAD, TRPQ…PVEG, and ATHE…IPGP. S13 and S68 each carry phosphoserine. Residues 199 to 233 show a composition bias toward basic and acidic residues; it reads RPQEAKGQEEQSPGLEDKDLDFKDKDSEVSTKPEG. Residues S210, S241, and S325 each carry the phosphoserine modification. The segment covering 326–339 has biased composition (low complexity); sequence PGSVTPPSSGTEPS. 2 positions are modified to phosphoserine: S348 and S350. Over residues 393-406 the composition is skewed to polar residues; the sequence is IPSSLDQEASSAES. Phosphoserine is present on S485. Residues 495 to 510 show a composition bias toward basic and acidic residues; the sequence is AIREETSSRATEERAP. A compositionally biased stretch (polar residues) spans 525–534; the sequence is TPVTLQSRPE. Residues 590–777 form the Reticulon domain; that stretch reads AIDLLYWRDI…KIPGAKRHAE (188 aa). The next 2 membrane-spanning stretches (helical) occupy residues 604 to 624 and 706 to 726; these read IVFG…VVSV and FAVL…LTLL.

As to quaternary structure, interacts with NDRG1. Interacts with BACE1. Interacts with TMEM33. In terms of assembly, interacts with UGCG; regulates the ceramide glucosyltransferase activity of UGCG. As to expression, expressed predominantly in central and peripheral nervous system of newborn and adult rats. Low levels have been also detected in heart, adrenal gland and spleen. Expression of isoform RTN1-B is restricted to particular neuronal types.

The protein resides in the endoplasmic reticulum membrane. Its subcellular location is the golgi apparatus membrane. Inhibits amyloid precursor protein processing, probably by blocking BACE1 activity. This Rattus norvegicus (Rat) protein is Reticulon-1 (Rtn1).